The primary structure comprises 166 residues: Probable calcium-binding protein CML17 (166 aa).

EF-hand domains are found at residues 12 to 47 (EQINELREIFRSFDRNKDGSLTQLELGSLLRALGVK), 48 to 83 (PSPDQFETLIDKADTKSNGLVEFPEFVALVSPELLS), 91 to 126 (YTEEQLLRLFRIFDTDGNGFITAAELAHSMAKLGHA), and 127 to 162 (LTVAELTGMIKEADSDGDGRINFQEFAKAINSAAFD). Asp-25, Asn-27, Asp-29, Ser-31, and Glu-36 together coordinate Ca(2+). Ca(2+)-binding residues include Asp-104, Asp-106, Asn-108, Glu-115, Asp-140, Asp-142, Asp-144, Arg-146, and Glu-151.

Its function is as follows. Potential calcium sensor. The protein is Probable calcium-binding protein CML17 (CML17) of Arabidopsis thaliana (Mouse-ear cress).